Here is a 349-residue protein sequence, read N- to C-terminus: MDIKSALSRIVGQLDLTTEEMRDVMRQIMTGQCTEAQIGAFLMGMRMKSESIDEIVGAVSVMRELADKVELKSLDGVVDIVGTGGDGANIFNVSTASSFVLAAAGCTVAKHGNRAVSGKSGSADLLEAAGIYLNLTPTQVARCIDSLGIGFMFAQSHHSAMKHAAGPRRDLGLRTLFNMLGPLTNPAGVKHQVVGVFAQTLCRPLAEVLQRLGSKHVLVVHSKDGLDEFSLAAPTFVAELKNGEITEYWVEPEDLGMKSQSLHGLAVENPQASLELIRDALGRRKTENGQKAAEMIVLNAGAALYAADHAMTLAQGVELAHDVLHTGLAWEKLQELGAFTAVFKVENEA.

Residues Gly-82, 85 to 86 (GD), 92 to 95 (NVST), 110 to 118 (KHGNRAVSG), and Ser-122 each bind 5-phospho-alpha-D-ribose 1-diphosphate. Gly-82 contributes to the anthranilate binding site. Residue Ser-94 coordinates Mg(2+). Asn-113 is an anthranilate binding site. Arg-168 is a binding site for anthranilate. Mg(2+) contacts are provided by Asp-227 and Glu-228.

This sequence belongs to the anthranilate phosphoribosyltransferase family. In terms of assembly, homodimer. Requires Mg(2+) as cofactor.

The enzyme catalyses N-(5-phospho-beta-D-ribosyl)anthranilate + diphosphate = 5-phospho-alpha-D-ribose 1-diphosphate + anthranilate. It functions in the pathway amino-acid biosynthesis; L-tryptophan biosynthesis; L-tryptophan from chorismate: step 2/5. In terms of biological role, catalyzes the transfer of the phosphoribosyl group of 5-phosphorylribose-1-pyrophosphate (PRPP) to anthranilate to yield N-(5'-phosphoribosyl)-anthranilate (PRA). In Pseudomonas putida (Arthrobacter siderocapsulatus), this protein is Anthranilate phosphoribosyltransferase.